The primary structure comprises 350 residues: Chorismate synthase (350 aa).

NADP(+)-binding residues include Arg-39 and Arg-45. FMN contacts are provided by residues 119–121, 213–214, Gly-258, 273–277, and Arg-299; these read RSS, QA, and KPIPT.

The protein belongs to the chorismate synthase family. Homotetramer. FMNH2 serves as cofactor.

It catalyses the reaction 5-O-(1-carboxyvinyl)-3-phosphoshikimate = chorismate + phosphate. It functions in the pathway metabolic intermediate biosynthesis; chorismate biosynthesis; chorismate from D-erythrose 4-phosphate and phosphoenolpyruvate: step 7/7. Functionally, catalyzes the anti-1,4-elimination of the C-3 phosphate and the C-6 proR hydrogen from 5-enolpyruvylshikimate-3-phosphate (EPSP) to yield chorismate, which is the branch point compound that serves as the starting substrate for the three terminal pathways of aromatic amino acid biosynthesis. This reaction introduces a second double bond into the aromatic ring system. The chain is Chorismate synthase from Thermoanaerobacter pseudethanolicus (strain ATCC 33223 / 39E) (Clostridium thermohydrosulfuricum).